An 88-amino-acid polypeptide reads, in one-letter code: MGTARFLRAVLLLSVLLMVTFPALLSAEHHDGRVDICRLPSDSGDCLRFFEMWYFDGTACTKFVYGGYGGNDNRFPTEKACMKRCAKA.

The N-terminal stretch at 1 to 27 is a signal peptide; that stretch reads MGTARFLRAVLLLSVLLMVTFPALLSA. The propeptide occupies 28-33; sequence EHHDGR. A BPTI/Kunitz inhibitor domain is found at 37–85; sequence CRLPSDSGDCLRFFEMWYFDGTACTKFVYGGYGGNDNRFPTEKACMKRC. Intrachain disulfides connect Cys37-Cys85 and Cys60-Cys81.

Belongs to the venom Kunitz-type family. 03 (sub-Kunitz) subfamily. Expressed by the venom gland.

Its subcellular location is the secreted. Serine protease inhibitor that inhibits trypsin at a molar ratio of 1:1. The sequence is that of Kunitz-type U15-theraphotoxin-Hhn1g from Cyriopagopus hainanus (Chinese bird spider).